We begin with the raw amino-acid sequence, 82 residues long: uncharacterized protein (82 aa).

This is an uncharacterized protein from Rickettsia prowazekii (strain Madrid E).